Reading from the N-terminus, the 207-residue chain is MIRKCTEHGYFRGGSCQQCKRPGRYVLDDSREEKLGRFVSGTLRHFPASAGVKMDEYGWVDLNAFCDVMKKRYNWMRKEYLYALVESDEKGRYQIRGFMIRARYGHSVNIELDYEESDAPYVYYGASPEEVDVLLENGIFPIKQRYVHLSTSYEKAAEVALIHTESPVILQVDAFRAQEDGISLKLATDYIVLAEKIPPEYLYVIEE.

The protein belongs to the KptA/TPT1 family.

Functionally, removes the 2'-phosphate from RNA via an intermediate in which the phosphate is ADP-ribosylated by NAD followed by a presumed transesterification to release the RNA and generate ADP-ribose 1''-2''-cyclic phosphate (APPR&gt;P). May function as an ADP-ribosylase. The sequence is that of Probable RNA 2'-phosphotransferase from Methanosarcina acetivorans (strain ATCC 35395 / DSM 2834 / JCM 12185 / C2A).